Consider the following 703-residue polypeptide: Elongation factor G 1 (703 aa).

One can recognise a tr-type G domain in the interval 8 to 290 (ERYRNIGISA…AVIDFLPSPV (283 aa)). GTP contacts are provided by residues 17-24 (AHIDAGKT), 88-92 (DTPGH), and 142-145 (NKMD).

This sequence belongs to the TRAFAC class translation factor GTPase superfamily. Classic translation factor GTPase family. EF-G/EF-2 subfamily.

It is found in the cytoplasm. Its function is as follows. Catalyzes the GTP-dependent ribosomal translocation step during translation elongation. During this step, the ribosome changes from the pre-translocational (PRE) to the post-translocational (POST) state as the newly formed A-site-bound peptidyl-tRNA and P-site-bound deacylated tRNA move to the P and E sites, respectively. Catalyzes the coordinated movement of the two tRNA molecules, the mRNA and conformational changes in the ribosome. This is Elongation factor G 1 from Ralstonia nicotianae (strain ATCC BAA-1114 / GMI1000) (Ralstonia solanacearum).